The following is a 1505-amino-acid chain: Phosphatidylinositol 3-kinase C2 domain-containing subunit gamma (1505 aa).

The interval 1–32 is disordered; sequence MAYNWQTEPNRAEPQEGGHDHQQCHHADQHLS. A compositionally biased stretch (basic and acidic residues) spans 10 to 31; that stretch reads NRAEPQEGGHDHQQCHHADQHL. The region spanning 278–370 is the PI3K-RBD domain; sequence PSRLFADTQF…IQLHLQRSRD (93 aa). Residues 540–688 form the C2 PI3K-type domain; that stretch reads LHSHLSFTVC…TPLTLQIDFP (149 aa). Residues 703–879 form the PIK helical domain; it reads RTDHQEPPRE…QELLAALQFC (177 aa). Positions 948–1226 constitute a PI3K/PI4K catalytic domain; that stretch reads DRDACSYFTS…KIKQSLECFP (279 aa). The segment at 954-960 is G-loop; the sequence is YFTSNAL. Positions 1090–1098 are catalytic loop; it reads GVCDRHNDN. An activation loop region spans residues 1109–1135; that stretch reads HIDFGKFLGHAQTFGGIKRDRAPFIFT. In terms of domain architecture, PX spans 1259 to 1371; it reads LNKTRTIQRV…SFFLSEHIQQ (113 aa). In terms of domain architecture, C2 spans 1384–1505; that stretch reads HSPDKSPQVQ…KWYPLGNSII (122 aa).

It belongs to the PI3/PI4-kinase family. In terms of tissue distribution, predominantly expressed in normal liver. High levels also found in regenerating liver. Very low levels found in heart and testis.

The protein localises to the membrane. The enzyme catalyses a 1,2-diacyl-sn-glycero-3-phospho-(1D-myo-inositol) + ATP = a 1,2-diacyl-sn-glycero-3-phospho-(1D-myo-inositol-3-phosphate) + ADP + H(+). It catalyses the reaction a 1,2-diacyl-sn-glycero-3-phospho-(1D-myo-inositol 4-phosphate) + ATP = a 1,2-diacyl-sn-glycero-3-phospho-(1D-myo-inositol-3,4-bisphosphate) + ADP + H(+). Functionally, generates phosphatidylinositol 3-phosphate (PtdIns3P) and phosphatidylinositol 3,4-bisphosphate (PtdIns(3,4)P2) that act as second messengers. May play a role in SDF1A-stimulated chemotaxis. The polypeptide is Phosphatidylinositol 3-kinase C2 domain-containing subunit gamma (Pik3c2g) (Rattus norvegicus (Rat)).